Consider the following 401-residue polypeptide: Argininosuccinate synthase (401 aa).

Residues 9 to 17 (AFSGGLDTS) and A35 each bind ATP. Y88 and S93 together coordinate L-citrulline. G117 serves as a coordination point for ATP. L-aspartate contacts are provided by T119, N123, and D124. N123 serves as a coordination point for L-citrulline. L-citrulline contacts are provided by R127 and Y273.

Belongs to the argininosuccinate synthase family. Type 1 subfamily. As to quaternary structure, homotetramer.

It localises to the cytoplasm. The enzyme catalyses L-citrulline + L-aspartate + ATP = 2-(N(omega)-L-arginino)succinate + AMP + diphosphate + H(+). It functions in the pathway amino-acid biosynthesis; L-arginine biosynthesis; L-arginine from L-ornithine and carbamoyl phosphate: step 2/3. The protein is Argininosuccinate synthase of Xylella fastidiosa (strain Temecula1 / ATCC 700964).